A 426-amino-acid chain; its full sequence is Anaerobic glycerol-3-phosphate dehydrogenase subunit B (426 aa).

It belongs to the anaerobic G-3-P dehydrogenase subunit B family. Composed of a catalytic GlpA/B dimer and of membrane bound GlpC. The cofactor is FMN.

It carries out the reaction a quinone + sn-glycerol 3-phosphate = dihydroxyacetone phosphate + a quinol. It functions in the pathway polyol metabolism; glycerol degradation via glycerol kinase pathway; glycerone phosphate from sn-glycerol 3-phosphate (anaerobic route): step 1/1. Functionally, conversion of glycerol 3-phosphate to dihydroxyacetone. Uses fumarate or nitrate as electron acceptor. The chain is Anaerobic glycerol-3-phosphate dehydrogenase subunit B from Haemophilus ducreyi (strain 35000HP / ATCC 700724).